The primary structure comprises 491 residues: Ribonuclease Y (491 aa).

Residues 4–24 traverse the membrane as a helical segment; it reads LIATVGVVAVAALVIAIFVVI. The 67-residue stretch at 181-247 folds into the KH domain; the sequence is VVSVVHLPGD…RVALERLVDD (67 aa). Residues 307-400 form the HD domain; the sequence is VLKHLVETAH…TQAADAISGG (94 aa).

Belongs to the RNase Y family.

Its subcellular location is the cell membrane. Endoribonuclease that initiates mRNA decay. The chain is Ribonuclease Y from Acidothermus cellulolyticus (strain ATCC 43068 / DSM 8971 / 11B).